We begin with the raw amino-acid sequence, 108 residues long: MNSGQLAEQHARTYLEQQGLTFVDANVRYPFGEIDLIMRQQDVWVFVEVKFRSSNQFGGALNALTSKQITRIRLAAEHYLQRQKLNPPCRFDVIAMNIDEINWLQGCF.

This sequence belongs to the UPF0102 family.

The protein is UPF0102 protein Sfri_0388 of Shewanella frigidimarina (strain NCIMB 400).